The following is a 349-amino-acid chain: Aminomethyltransferase (349 aa).

It belongs to the GcvT family. As to quaternary structure, the glycine cleavage system is composed of four proteins: P, T, L and H.

The catalysed reaction is N(6)-[(R)-S(8)-aminomethyldihydrolipoyl]-L-lysyl-[protein] + (6S)-5,6,7,8-tetrahydrofolate = N(6)-[(R)-dihydrolipoyl]-L-lysyl-[protein] + (6R)-5,10-methylene-5,6,7,8-tetrahydrofolate + NH4(+). Its function is as follows. The glycine cleavage system catalyzes the degradation of glycine. This chain is Aminomethyltransferase, found in Thermus thermophilus (strain ATCC 27634 / DSM 579 / HB8).